A 503-amino-acid polypeptide reads, in one-letter code: Lycopene beta cyclase, chloroplastic/chromoplastic (503 aa).

Residues 1-85 constitute a chloroplast and chromoplast transit peptide; that stretch reads MDTLLRTHNR…DLPLYDPSKA (85 aa). 90–117 provides a ligand contact to NAD(+); the sequence is LAVVGGGPLARSCSTSLGGGLSVVSIDP.

The protein belongs to the lycopene cyclase family.

Its subcellular location is the plastid. The protein localises to the chloroplast. It localises to the chromoplast. It is found in the chromoplast membrane. The protein resides in the chloroplast membrane. It carries out the reaction a carotenoid psi-end group = a carotenoid beta-end derivative. It participates in carotenoid biosynthesis; beta-carotene biosynthesis. The protein operates within carotenoid biosynthesis; beta-zeacarotene biosynthesis. Catalyzes the double cyclization reaction which converts lycopene to beta-carotene and neurosporene to beta-zeacarotene. The chain is Lycopene beta cyclase, chloroplastic/chromoplastic (LCY1) from Narcissus pseudonarcissus (Daffodil).